The sequence spans 210 residues: Large ribosomal subunit protein uL4 (210 aa).

Positions 41–51 (ANARQGTQSTK) are enriched in polar residues. Disordered regions lie at residues 41 to 60 (ANAR…QGSS) and 67 to 98 (KGTG…DFSK).

Belongs to the universal ribosomal protein uL4 family. Part of the 50S ribosomal subunit.

Its function is as follows. One of the primary rRNA binding proteins, this protein initially binds near the 5'-end of the 23S rRNA. It is important during the early stages of 50S assembly. It makes multiple contacts with different domains of the 23S rRNA in the assembled 50S subunit and ribosome. In terms of biological role, forms part of the polypeptide exit tunnel. The polypeptide is Large ribosomal subunit protein uL4 (Dehalococcoides mccartyi (strain ATCC BAA-2266 / KCTC 15142 / 195) (Dehalococcoides ethenogenes (strain 195))).